The primary structure comprises 465 residues: ATP synthase subunit beta (465 aa).

Residue 152-159 coordinates ATP; that stretch reads GGAGVGKT.

Belongs to the ATPase alpha/beta chains family. In terms of assembly, F-type ATPases have 2 components, CF(1) - the catalytic core - and CF(0) - the membrane proton channel. CF(1) has five subunits: alpha(3), beta(3), gamma(1), delta(1), epsilon(1). CF(0) has three main subunits: a(1), b(2) and c(9-12). The alpha and beta chains form an alternating ring which encloses part of the gamma chain. CF(1) is attached to CF(0) by a central stalk formed by the gamma and epsilon chains, while a peripheral stalk is formed by the delta and b chains.

It localises to the cell membrane. The enzyme catalyses ATP + H2O + 4 H(+)(in) = ADP + phosphate + 5 H(+)(out). Produces ATP from ADP in the presence of a proton gradient across the membrane. The catalytic sites are hosted primarily by the beta subunits. The sequence is that of ATP synthase subunit beta from Ruminiclostridium cellulolyticum (strain ATCC 35319 / DSM 5812 / JCM 6584 / H10) (Clostridium cellulolyticum).